The primary structure comprises 320 residues: Uroplakin-3b (320 aa).

The N-terminal stretch at 1–29 (MGLPWGQPHLGLQMLLLALNCLRPSLSLG) is a signal peptide. The Lumenal portion of the chain corresponds to 30 to 240 (EWGSWMDASS…LHPLFSGRPP (211 aa)). Residue Asn-133 is glycosylated (N-linked (GlcNAc...) asparagine). The chain crosses the membrane as a helical span at residues 241–266 (TLGLLGSLYHALLQPVVAGGGPGAAA). The Cytoplasmic portion of the chain corresponds to 267 to 320 (DRLLHGQALHDPPHPTQRGRHTAGGLQAWPGPPPQPQPLAWPLCMGLGEMGRWE). A disordered region spans residues 273 to 303 (QALHDPPHPTQRGRHTAGGLQAWPGPPPQPQ).

Belongs to the uroplakin-3 family. As to quaternary structure, heterodimer with uroplakin-1B (UPK1B).

The protein localises to the cell membrane. Component of the asymmetric unit membrane (AUM); a highly specialized biomembrane elaborated by terminally differentiated urothelial cells. May play an important role in AUM-cytoskeleton interaction in terminally differentiated urothelial cells. It also contributes to the formation of urothelial glycocalyx which may play an important role in preventing bacterial adherence. This Homo sapiens (Human) protein is Uroplakin-3b (UPK3B).